The primary structure comprises 338 residues: Egl nine homolog 1 (338 aa).

Over residues Pro-1–Arg-11 the composition is skewed to low complexity. Residues Pro-1–Gln-99 form a disordered region. A Phosphoserine modification is found at Ser-52. S-nitrosocysteine is present on residues Cys-116 and Cys-123. Residues Val-156 to Ile-166 are beta(2)beta(3) 'finger-like' loop. The 99-residue stretch at Gly-209–Asp-307 folds into the Fe2OG dioxygenase domain. The residue at position 217 (Cys-217) is an S-nitrosocysteine. Fe cation is bound by residues His-228 and Asp-230. S-nitrosocysteine occurs at positions 238 and 241. His-289 is a Fe cation binding site. Position 298 (Arg-298) interacts with 2-oxoglutarate.

As to quaternary structure, monomer. Interacts with ING4; the interaction inhibits the hydroxylation of HIF alpha proteins. Interacts with PTGES3 (via PXLE motif); thereby recruiting EGLN1 to the HSP90 pathway to facilitate HIF alpha proteins hydroxylation. Interacts with LIMD1. Found in a complex composed of LIMD1, VHL, EGLN1/PHD2, ELOB and CUL2. Interacts with EPAS1. Interacts with CBFA2T3 and HIF1A. Requires Fe(2+) as cofactor. The cofactor is L-ascorbate. S-nitrosylation inhibits the enzyme activity up to 60% under aerobic conditions. Chelation of Fe(2+) has no effect on the S-nitrosylation. It is uncertain whether nitrosylation occurs on Cys-238 or Cys-241. As to expression, expressed in heart, liver, kidney, brain, liver and testis. Highest levels in heart, lowest in liver.

It is found in the cytoplasm. The protein localises to the nucleus. The catalysed reaction is L-prolyl-[hypoxia-inducible factor alpha subunit] + 2-oxoglutarate + O2 = trans-4-hydroxy-L-prolyl-[hypoxia-inducible factor alpha subunit] + succinate + CO2. Increased activation in hypoxia. Hydroxylation of the C-terminal ODD domain (CODD) proline of HIF1A is activated by cyclosporin A (CsA). Its function is as follows. Cellular oxygen sensor that catalyzes, under normoxic conditions, the post-translational formation of 4-hydroxyproline in hypoxia-inducible factor (HIF) alpha proteins. Hydroxylates a specific proline found in each of the oxygen-dependent degradation (ODD) domains (N-terminal, NODD, and C-terminal, CODD) of HIF1A. Also hydroxylates HIF2A. Has a preference for the CODD site for both HIF1A and HIF1B. Hydroxylated HIFs are then targeted for proteasomal degradation via the von Hippel-Lindau ubiquitination complex. Under hypoxic conditions, the hydroxylation reaction is attenuated allowing HIFs to escape degradation resulting in their translocation to the nucleus, heterodimerization with HIF1B, and increased expression of hypoxy-inducible genes. EGLN1 is the most important isozyme under normoxia and, through regulating the stability of HIF1, involved in various hypoxia-influenced processes such as angiogenesis in retinal and cardiac functionality. Target proteins are preferentially recognized via a LXXLAP motif. The sequence is that of Egl nine homolog 1 (Egln1) from Rattus norvegicus (Rat).